We begin with the raw amino-acid sequence, 83 residues long: Delta-conotoxin-like MVIC (83 aa).

Residues 1–22 (MKLTCVMIVAVLFLTTWTFVTA) form the signal peptide. Residues 23–49 (DDSRYGLKNLFPKARHEMKNPEASKLN) constitute a propeptide that is removed on maturation. Cystine bridges form between cysteine 54-cysteine 69, cysteine 61-cysteine 73, and cysteine 68-cysteine 78. 4-hydroxyproline occurs at positions 56 and 65.

This sequence belongs to the conotoxin O1 superfamily. As to expression, expressed by the venom duct.

It is found in the secreted. Its function is as follows. Delta-conotoxins bind to site 6 of voltage-gated sodium channels (Nav) and inhibit the inactivation process. The protein is Delta-conotoxin-like MVIC of Conus magus (Magical cone).